The chain runs to 316 residues: MLKRNKVVLVGAGGVGSSFAYALTIDNSLVHELVIIDVAQDKAKGEVMDLNHGQMFLEKNIKIAFGNYDDCSDADIVVITAGLNQKPGETRLDLVGKNTKIFKEIVTGVVSSGFNGIFVIASNPVDIMTYVTMKYSNFPTHKVIGTGTTLDTSRLRYFLAERFNVNTQNIHSYIMGEHGDSSFATWDETKIAMKSLSEYIAEGTIREVELDEIHKKVVNAAYEVIKLKGATYYAIGLGIKKIVNAIISDQNLILPISSYINGQYGNFIKDIYIGAPAVVCKEGVKEVLDFKISDRELEKFKISANQLKSYIDKIEF.

NAD(+)-binding positions include V15, D37, K42, Y68, and 82–83 (GL). Substrate contacts are provided by residues Q85, R91, and 123-126 (NPVD). NAD(+) contacts are provided by residues 121 to 123 (ASN) and T146. 151–154 (DTSR) contributes to the substrate binding site. 2 residues coordinate beta-D-fructose 1,6-bisphosphate: R156 and H171. The active-site Proton acceptor is the H178. Y222 is subject to Phosphotyrosine. T231 serves as a coordination point for substrate.

This sequence belongs to the LDH/MDH superfamily. LDH family. In terms of assembly, homotetramer.

The protein localises to the cytoplasm. It catalyses the reaction (S)-lactate + NAD(+) = pyruvate + NADH + H(+). Its pathway is fermentation; pyruvate fermentation to lactate; (S)-lactate from pyruvate: step 1/1. With respect to regulation, allosterically activated by fructose 1,6-bisphosphate (FBP). Functionally, catalyzes the conversion of lactate to pyruvate. The polypeptide is L-lactate dehydrogenase (Borrelia hermsii (strain HS1 / DAH)).